A 280-amino-acid polypeptide reads, in one-letter code: UDP-3-O-acyl-N-acetylglucosamine deacetylase (280 aa).

Residues H79, H237, and D241 each contribute to the Zn(2+) site. Catalysis depends on H264, which acts as the Proton donor.

The protein belongs to the LpxC family. It depends on Zn(2+) as a cofactor.

The catalysed reaction is a UDP-3-O-[(3R)-3-hydroxyacyl]-N-acetyl-alpha-D-glucosamine + H2O = a UDP-3-O-[(3R)-3-hydroxyacyl]-alpha-D-glucosamine + acetate. It participates in glycolipid biosynthesis; lipid IV(A) biosynthesis; lipid IV(A) from (3R)-3-hydroxytetradecanoyl-[acyl-carrier-protein] and UDP-N-acetyl-alpha-D-glucosamine: step 2/6. In terms of biological role, catalyzes the hydrolysis of UDP-3-O-myristoyl-N-acetylglucosamine to form UDP-3-O-myristoylglucosamine and acetate, the committed step in lipid A biosynthesis. The polypeptide is UDP-3-O-acyl-N-acetylglucosamine deacetylase (Chlamydia felis (strain Fe/C-56) (Chlamydophila felis)).